A 430-amino-acid polypeptide reads, in one-letter code: Tol-Pal system protein TolB (430 aa).

Residues 1–21 (MKQALRVAFGFLILWASVLHA) form the signal peptide.

The protein belongs to the TolB family. The Tol-Pal system is composed of five core proteins: the inner membrane proteins TolA, TolQ and TolR, the periplasmic protein TolB and the outer membrane protein Pal. They form a network linking the inner and outer membranes and the peptidoglycan layer.

It localises to the periplasm. Its function is as follows. Part of the Tol-Pal system, which plays a role in outer membrane invagination during cell division and is important for maintaining outer membrane integrity. TolB occupies a key intermediary position in the Tol-Pal system because it communicates directly with both membrane-embedded components, Pal in the outer membrane and TolA in the inner membrane. This chain is Tol-Pal system protein TolB, found in Shigella dysenteriae serotype 1 (strain Sd197).